Consider the following 153-residue polypeptide: Endoribonuclease YbeY (153 aa).

Zn(2+) contacts are provided by histidine 114, histidine 118, and histidine 124.

Belongs to the endoribonuclease YbeY family. Requires Zn(2+) as cofactor.

The protein resides in the cytoplasm. Single strand-specific metallo-endoribonuclease involved in late-stage 70S ribosome quality control and in maturation of the 3' terminus of the 16S rRNA. The sequence is that of Endoribonuclease YbeY from Nitrosococcus oceani (strain ATCC 19707 / BCRC 17464 / JCM 30415 / NCIMB 11848 / C-107).